Here is a 382-residue protein sequence, read N- to C-terminus: Dual-specificity RNA methyltransferase RlmN (382 aa).

Residue E95 is the Proton acceptor of the active site. The Radical SAM core domain occupies 101 to 347 (EDDRGTLCIS…TTVRKTRGDD (247 aa)). A disulfide bridge connects residues C108 and C352. [4Fe-4S] cluster is bound by residues C115, C119, and C122. S-adenosyl-L-methionine-binding positions include 178 to 179 (GE), S210, 232 to 234 (SLH), and N309. Residue C352 is the S-methylcysteine intermediate of the active site.

It belongs to the radical SAM superfamily. RlmN family. It depends on [4Fe-4S] cluster as a cofactor.

It is found in the cytoplasm. The enzyme catalyses adenosine(2503) in 23S rRNA + 2 reduced [2Fe-2S]-[ferredoxin] + 2 S-adenosyl-L-methionine = 2-methyladenosine(2503) in 23S rRNA + 5'-deoxyadenosine + L-methionine + 2 oxidized [2Fe-2S]-[ferredoxin] + S-adenosyl-L-homocysteine. It catalyses the reaction adenosine(37) in tRNA + 2 reduced [2Fe-2S]-[ferredoxin] + 2 S-adenosyl-L-methionine = 2-methyladenosine(37) in tRNA + 5'-deoxyadenosine + L-methionine + 2 oxidized [2Fe-2S]-[ferredoxin] + S-adenosyl-L-homocysteine. Its function is as follows. Specifically methylates position 2 of adenine 2503 in 23S rRNA and position 2 of adenine 37 in tRNAs. m2A2503 modification seems to play a crucial role in the proofreading step occurring at the peptidyl transferase center and thus would serve to optimize ribosomal fidelity. This chain is Dual-specificity RNA methyltransferase RlmN, found in Bordetella avium (strain 197N).